Reading from the N-terminus, the 390-residue chain is Chalcone synthase (390 aa).

The active site involves cysteine 164.

It belongs to the thiolase-like superfamily. Chalcone/stilbene synthases family.

It catalyses the reaction (E)-4-coumaroyl-CoA + 3 malonyl-CoA + 3 H(+) = 2',4,4',6'-tetrahydroxychalcone + 3 CO2 + 4 CoA. It functions in the pathway secondary metabolite biosynthesis; flavonoid biosynthesis. In terms of biological role, the primary product of this enzyme is 4,2',4',6'-tetrahydroxychalcone (also termed naringenin-chalcone or chalcone) which can under specific conditions spontaneously isomerize into naringenin. The sequence is that of Chalcone synthase (CHS) from Antirrhinum majus (Garden snapdragon).